The chain runs to 401 residues: Adenosine 3'-phospho 5'-phosphosulfate transporter 2 (401 aa).

N-linked (GlcNAc...) asparagine glycans are attached at residues Asn12 and Asn71. 6 helical membrane passes run 78-98 (LTQF…YGYL), 111-131 (YGWY…LIEL), 147-167 (MIIA…LGYL), 170-190 (PTQV…GVFI), 200-220 (VSAA…DSTI), and 223-243 (NFNL…AVIG). Asn254 carries an N-linked (GlcNAc...) asparagine glycan. 4 consecutive transmembrane segments (helical) span residues 267–287 (IGFV…PAVT), 298–317 (GYAF…VLAL), 324–346 (LIAV…IFFA), and 349–369 (FTFQ…LNVY).

This sequence belongs to the nucleotide-sugar transporter family. SLC35B subfamily.

Its subcellular location is the golgi apparatus membrane. The enzyme catalyses 3'-phosphoadenylyl sulfate(in) + adenosine 3',5'-bisphosphate(out) = 3'-phosphoadenylyl sulfate(out) + adenosine 3',5'-bisphosphate(in). In terms of biological role, probably functions as a 3'-phosphoadenylyl sulfate:adenosine 3',5'-bisphosphate antiporter at the Golgi membranes. Mediates the transport from the cytosol into the lumen of the Golgi of 3'-phosphoadenylyl sulfate/adenosine 3'-phospho 5'-phosphosulfate (PAPS), a universal sulfuryl donor for sulfation events that take place in that compartment. This Pongo abelii (Sumatran orangutan) protein is Adenosine 3'-phospho 5'-phosphosulfate transporter 2.